A 545-amino-acid polypeptide reads, in one-letter code: Sterol O-acyltransferase 1 (545 aa).

M1 carries the N-acetylmethionine modification. The segment at 1–24 is disordered; the sequence is MVGEETSLRNRLSRSAENPEQDEA. The Cytoplasmic segment spans residues 1-133; that stretch reads MVGEETSLRN…LDELFEVDHI (133 aa). The residue at position 7 (S7) is a Phosphoserine. Polar residues predominate over residues 9 to 18; that stretch reads RNRLSRSAEN. Residue H132 participates in cholesterol binding. The helical transmembrane segment at 134–155 threads the bilayer; it reads RTIYHMFIALLIIFILSTLVVD. At 156–175 the chain is on the lumenal side; that stretch reads YIDEGRLVLEFSLLAYAFGQ. A helical membrane pass occupies residues 176–201; sequence FPIVIWTWWAMFLSTLAIPYFLFQRW. The Cytoplasmic segment spans residues 202–213; the sequence is AHGYSKSSHPLI. Residues 214-239 form a helical membrane-spanning segment; the sequence is YSLIHGAFFLVFQLGILGFIPTYVVL. The Lumenal segment spans residues 240–247; the sequence is AYTLPPAS. Residues 248–271 traverse the membrane as a helical segment; it reads RFILILEQIRLVMKAHSYVRENVP. Topologically, residues 272–314 are cytoplasmic; sequence RVLSAAKEKSSTVPVPTVNQYLYFLFAPTLIYRDSYPRTPTVR. Residues 315-347 traverse the membrane as a helical segment; it reads WGYVAMQFLQVFGCLFYVYYIFERLCAPLFRNI. Topologically, residues 348–364 are lumenal; that stretch reads KQEPFSARVLVLCVFNS. The helical transmembrane segment at 365-390 threads the bilayer; the sequence is ILPGVLMLFLSFFAFLHCWLNAFAEM. Topologically, residues 391-438 are cytoplasmic; it reads LRFGDRMFYKDWWNSTSYSNYYRTWNVVVHDWLYYYVYKDLLWFFSKR. The FYXDWWN motif signature appears at 398-404; it reads FYKDWWN. Residues N410, R413, N416, H420, Y428, and S451 each coordinate an acyl-CoA. A helical transmembrane segment spans residues 439–463; the sequence is FRPAAMLAVFALSAVVHEYALAVCL. Residue H455 is part of the active site. Over 464–469 the chain is Lumenal; that stretch reads SYFYPV. The chain crosses the membrane as a helical span at residues 470-485; sequence LFVLFMFFGMAFNFIV. The Cytoplasmic portion of the chain corresponds to 486 to 491; sequence NDSRKR. The chain crosses the membrane as a helical span at residues 492–523; it reads PVWNIMVRASLFLGHGVILCFYSQEWYARQRC. C523 and C541 are joined by a disulfide. Residues 524-545 are Lumenal-facing; the sequence is PLKNPTFLDYVRPRTWTCRYVF.

This sequence belongs to the membrane-bound acyltransferase family. Sterol o-acyltransferase subfamily. As to quaternary structure, may form homo- or heterodimers. Interacts with UBIAD1.

The protein resides in the endoplasmic reticulum membrane. The catalysed reaction is a sterol + a long-chain fatty acyl-CoA = a long-chain 3-hydroxysterol ester + CoA. It carries out the reaction cholesterol + an acyl-CoA = a cholesterol ester + CoA. The enzyme catalyses cholesterol + (9Z)-octadecenoyl-CoA = cholesteryl (9Z-octadecenoate) + CoA. It catalyses the reaction cholesterol + hexadecanoyl-CoA = cholesteryl hexadecanoate + CoA. The catalysed reaction is octadecanoyl-CoA + cholesterol = cholesteryl octadecanoate + CoA. It carries out the reaction (9Z,12Z)-octadecadienoyl-CoA + cholesterol = cholesteryl (9Z,12Z)-octadecadienoate + CoA. The enzyme catalyses (5Z,8Z,11Z,14Z)-eicosatetraenoyl-CoA + cholesterol = cholesteryl (5Z,8Z,11Z,14Z)-eicosatetraenoate + CoA. It catalyses the reaction (9Z)-hexadecenoyl-CoA + cholesterol = cholesteryl (9Z)-hexadecenoate + CoA. The catalysed reaction is (11Z)-octadecenoyl-CoA + cholesterol = cholesteryl (11Z)-octadecenoate + CoA. It carries out the reaction (7Z)-octadecenoyl-CoA + cholesterol = cholesteryl (7Z)-octadecenoate + CoA. Catalyzes the formation of fatty acid-cholesterol esters, which are less soluble in membranes than cholesterol. Plays a role in lipoprotein assembly and dietary cholesterol absorption. Preferentially utilizes oleoyl-CoA ((9Z)-octadecenoyl-CoA) as substrate: shows a higher activity towards an acyl-CoA substrate with a double bond at the delta-9 position (9Z) than towards saturated acyl-CoA or an unsaturated acyl-CoA with a double bond at the delta-7 (7Z) or delta-11 (11Z) positions. This chain is Sterol O-acyltransferase 1, found in Rattus norvegicus (Rat).